A 365-amino-acid chain; its full sequence is tRNA-specific 2-thiouridylase MnmA (365 aa).

ATP-binding positions include Ala-14–Ser-21 and Leu-40. Residue Cys-108 is the Nucleophile of the active site. The cysteines at positions 108 and 204 are disulfide-linked. An ATP-binding site is contributed by Gly-132. Positions Lys-154–Gln-156 are interaction with tRNA. Residue Cys-204 is the Cysteine persulfide intermediate of the active site.

It belongs to the MnmA/TRMU family.

Its subcellular location is the cytoplasm. It carries out the reaction S-sulfanyl-L-cysteinyl-[protein] + uridine(34) in tRNA + AH2 + ATP = 2-thiouridine(34) in tRNA + L-cysteinyl-[protein] + A + AMP + diphosphate + H(+). Functionally, catalyzes the 2-thiolation of uridine at the wobble position (U34) of tRNA, leading to the formation of s(2)U34. The polypeptide is tRNA-specific 2-thiouridylase MnmA (Rickettsia massiliae (strain Mtu5)).